Here is a 330-residue protein sequence, read N- to C-terminus: DNA-directed RNA polymerase subunit alpha (330 aa).

Positions 1-236 (MQGSVTEFLK…EQLDAFVDLR (236 aa)) are alpha N-terminal domain (alpha-NTD). The interval 250-330 (FDPILLRPVD…NWPPASIAED (81 aa)) is alpha C-terminal domain (alpha-CTD).

The protein belongs to the RNA polymerase alpha chain family. In terms of assembly, homodimer. The RNAP catalytic core consists of 2 alpha, 1 beta, 1 beta' and 1 omega subunit. When a sigma factor is associated with the core the holoenzyme is formed, which can initiate transcription.

It catalyses the reaction RNA(n) + a ribonucleoside 5'-triphosphate = RNA(n+1) + diphosphate. In terms of biological role, DNA-dependent RNA polymerase catalyzes the transcription of DNA into RNA using the four ribonucleoside triphosphates as substrates. The polypeptide is DNA-directed RNA polymerase subunit alpha (Vibrio atlanticus (strain LGP32) (Vibrio splendidus (strain Mel32))).